The primary structure comprises 434 residues: Serine/threonine transporter SstT (434 aa).

9 helical membrane-spanning segments follow: residues 14-34, 41-61, 72-92, 135-155, 172-192, 210-230, 282-302, 316-336, and 351-371; these read IVIG…WSFI, FVGA…MSAI, FGTV…AAVA, ALVE…GSGL, TVSA…VGLL, LLML…PFMV, ISIP…VSIM, IFLA…VSGI, and FGIS…IGVV. Positions 414–434 are disordered; the sequence is KGTAEVVTPEKANEAEESEQV.

It belongs to the dicarboxylate/amino acid:cation symporter (DAACS) (TC 2.A.23) family.

The protein localises to the cell membrane. It carries out the reaction L-serine(in) + Na(+)(in) = L-serine(out) + Na(+)(out). It catalyses the reaction L-threonine(in) + Na(+)(in) = L-threonine(out) + Na(+)(out). Its function is as follows. Involved in the import of serine and threonine into the cell, with the concomitant import of sodium (symport system). In Lacticaseibacillus paracasei (strain ATCC 334 / BCRC 17002 / CCUG 31169 / CIP 107868 / KCTC 3260 / NRRL B-441) (Lactobacillus paracasei), this protein is Serine/threonine transporter SstT.